We begin with the raw amino-acid sequence, 356 residues long: Putative [LysW]-L-2-aminoadipate/[LysW]-L-glutamate phosphate reductase (356 aa).

11 to 14 (SGYT) serves as a coordination point for NADP(+). Residue cysteine 157 is part of the active site. Asparagine 323 is a binding site for NADP(+).

Belongs to the NAGSA dehydrogenase family. Type 1 subfamily. LysY sub-subfamily.

The protein resides in the cytoplasm. The enzyme catalyses [amino-group carrier protein]-C-terminal-N-(1-carboxy-5-oxopentan-1-yl)-L-glutamine + phosphate + NADP(+) = [amino-group carrier protein]-C-terminal-N-(1-carboxy-5-phosphooxy-5-oxopentan-1-yl)-L-glutamine + NADPH + H(+). It catalyses the reaction [amino-group carrier protein]-C-terminal-gamma-(L-glutamyl-5-semialdehyde)-L-glutamate + phosphate + NADP(+) = [amino-group carrier protein]-C-terminal-gamma-(5-phospho-L-glutamyl)-L-glutamate + NADPH + H(+). It participates in amino-acid biosynthesis; L-lysine biosynthesis via AAA pathway; L-lysine from L-alpha-aminoadipate (Thermus route): step 3/5. Its pathway is amino-acid biosynthesis; L-arginine biosynthesis. In terms of biological role, involved in both the arginine and lysine biosynthetic pathways. The protein is Putative [LysW]-L-2-aminoadipate/[LysW]-L-glutamate phosphate reductase of Ignicoccus hospitalis (strain KIN4/I / DSM 18386 / JCM 14125).